A 70-amino-acid chain; its full sequence is Cecropin-P1 (70 aa).

The N-terminal stretch at 1–13 is a signal peptide; the sequence is MFLIYLFVQTAES. The propeptide at 45 to 70 is removed in mature form; the sequence is RRRFVAEQDAIHSRVSREVPTLSDSV.

Expressed in the body wall, intestine, uterus and ovary.

It localises to the secreted. Functionally, has antibacterial activity against several Gram-positive and Gram-negative bacteria. Is weakly active against yeasts. Acts by a nonpore mechanism. The protein is Cecropin-P1 (ASCEC-1) of Ascaris suum (Pig roundworm).